Reading from the N-terminus, the 94-residue chain is Progonadoliberin-3 (94 aa).

Residues 1 to 23 (MEGKGRVLVQLLMLACVLEVSLC) form the signal peptide. At Gln-24 the chain carries Pyrrolidone carboxylic acid. Position 33 is a glycine amide (Gly-33).

Belongs to the GnRH family.

Its subcellular location is the secreted. Functionally, stimulates the secretion of gonadotropins. The protein is Progonadoliberin-3 (gnrh3) of Carassius auratus (Goldfish).